Consider the following 158-residue polypeptide: S-ribosylhomocysteine lyase (158 aa).

Residues His-54, His-58, and Cys-124 each coordinate Fe cation.

This sequence belongs to the LuxS family. Homodimer. Requires Fe cation as cofactor.

The catalysed reaction is S-(5-deoxy-D-ribos-5-yl)-L-homocysteine = (S)-4,5-dihydroxypentane-2,3-dione + L-homocysteine. Its function is as follows. Involved in the synthesis of autoinducer 2 (AI-2) which is secreted by bacteria and is used to communicate both the cell density and the metabolic potential of the environment. The regulation of gene expression in response to changes in cell density is called quorum sensing. Catalyzes the transformation of S-ribosylhomocysteine (RHC) to homocysteine (HC) and 4,5-dihydroxy-2,3-pentadione (DPD). In Limosilactobacillus reuteri (strain DSM 20016) (Lactobacillus reuteri), this protein is S-ribosylhomocysteine lyase.